The following is a 50-amino-acid chain: PsaJ-like protein asl3190 (50 aa).

A helical membrane pass occupies residues 21-41 (VLAVISISVAFSTWAIFNYIF).

This sequence belongs to the PsaJ family.

It localises to the cellular thylakoid membrane. The chain is PsaJ-like protein asl3190 from Nostoc sp. (strain PCC 7120 / SAG 25.82 / UTEX 2576).